A 1174-amino-acid chain; its full sequence is Tyrosine-protein phosphatase non-receptor type 21 (1174 aa).

One can recognise an FERM domain in the interval 23–308; the sequence is LVARIQLLNN…ARHKFYRLNQ (286 aa). The segment covering 396 to 423 has biased composition (polar residues); the sequence is SAHSTNSLNNPQPYLQPSPMSSNPSITG. Residues 396–445 are disordered; sequence SAHSTNSLNNPQPYLQPSPMSSNPSITGSDVMRPDYLPSHRHSAVIPPSY. 5 positions are modified to phosphoserine: serine 577, serine 589, serine 590, serine 637, and serine 673. The tract at residues 673 to 692 is disordered; that stretch reads SQPSVFTERTQREGPEEAEG. The span at 681 to 692 shows a compositional bias: basic and acidic residues; the sequence is RTQREGPEEAEG. Serine 710 and serine 711 each carry phosphoserine. Disordered stretches follow at residues 711–745 and 769–806; these read SEEE…DPPG and KRMM…TSGR. Residues 712-722 show a composition bias toward acidic residues; the sequence is EEEEDEDFEEE. Over residues 796–805 the composition is skewed to polar residues; sequence MSESDLTTSG. Serine 797, serine 799, and serine 804 each carry phosphoserine. Residues 896–1167 enclose the Tyrosine-protein phosphatase domain; sequence VFTEYERILK…TFVYRVLIQF (272 aa). Substrate-binding positions include glutamate 1067, 1108–1114, and glutamine 1152; that span reads CSAGVGR. Cysteine 1108 serves as the catalytic Phosphocysteine intermediate.

Belongs to the protein-tyrosine phosphatase family. Non-receptor class subfamily.

Its subcellular location is the cytoplasm. It is found in the cytoskeleton. It carries out the reaction O-phospho-L-tyrosyl-[protein] + H2O = L-tyrosyl-[protein] + phosphate. The sequence is that of Tyrosine-protein phosphatase non-receptor type 21 (PTPN21) from Homo sapiens (Human).